Here is a 128-residue protein sequence, read N- to C-terminus: Aspartate 1-decarboxylase (128 aa).

The active-site Schiff-base intermediate with substrate; via pyruvic acid is S25. S25 carries the pyruvic acid (Ser) modification. T57 contacts substrate. Residue Y58 is the Proton donor of the active site. 73 to 75 provides a ligand contact to substrate; sequence GAA.

Belongs to the PanD family. In terms of assembly, heterooctamer of four alpha and four beta subunits. Requires pyruvate as cofactor. Is synthesized initially as an inactive proenzyme, which is activated by self-cleavage at a specific serine bond to produce a beta-subunit with a hydroxyl group at its C-terminus and an alpha-subunit with a pyruvoyl group at its N-terminus.

Its subcellular location is the cytoplasm. The enzyme catalyses L-aspartate + H(+) = beta-alanine + CO2. It participates in cofactor biosynthesis; (R)-pantothenate biosynthesis; beta-alanine from L-aspartate: step 1/1. Functionally, catalyzes the pyruvoyl-dependent decarboxylation of aspartate to produce beta-alanine. The protein is Aspartate 1-decarboxylase of Chlorobium phaeovibrioides (strain DSM 265 / 1930) (Prosthecochloris vibrioformis (strain DSM 265)).